A 312-amino-acid chain; its full sequence is Ribosomal protein L11 methyltransferase (312 aa).

S-adenosyl-L-methionine is bound by residues Thr162, Gly183, Asp205, and Asn248.

It belongs to the methyltransferase superfamily. PrmA family.

It localises to the cytoplasm. It catalyses the reaction L-lysyl-[protein] + 3 S-adenosyl-L-methionine = N(6),N(6),N(6)-trimethyl-L-lysyl-[protein] + 3 S-adenosyl-L-homocysteine + 3 H(+). Its function is as follows. Methylates ribosomal protein L11. The sequence is that of Ribosomal protein L11 methyltransferase from Exiguobacterium sp. (strain ATCC BAA-1283 / AT1b).